The following is a 414-amino-acid chain: Tyrosine--tRNA ligase (414 aa).

Residue Tyr-38 participates in L-tyrosine binding. The short motif at 43 to 52 (PTAISLHLGN) is the 'HIGH' region element. Tyr-165 and Gln-169 together coordinate L-tyrosine. A 'KMSKS' region motif is present at residues 227–231 (KIGKS). An ATP-binding site is contributed by Lys-230. Residues 349–413 (DDLFLTLVDS…KGKKQYWVIY (65 aa)) form the S4 RNA-binding domain.

It belongs to the class-I aminoacyl-tRNA synthetase family. TyrS type 1 subfamily. Homodimer.

Its subcellular location is the cytoplasm. It catalyses the reaction tRNA(Tyr) + L-tyrosine + ATP = L-tyrosyl-tRNA(Tyr) + AMP + diphosphate + H(+). Its function is as follows. Catalyzes the attachment of tyrosine to tRNA(Tyr) in a two-step reaction: tyrosine is first activated by ATP to form Tyr-AMP and then transferred to the acceptor end of tRNA(Tyr). This chain is Tyrosine--tRNA ligase, found in Mycoplasmopsis pulmonis (strain UAB CTIP) (Mycoplasma pulmonis).